We begin with the raw amino-acid sequence, 1457 residues long: Receptor-type tyrosine-protein phosphatase kappa (1457 aa).

Residues 1–25 (MDVAAAALPAFVALWLLYPWPLLGS) form the signal peptide. Over 26–752 (ALGQFSAGGC…PAKQTDRVVK (727 aa)) the chain is Extracellular. Residues 30 to 193 (FSAGGCTFDD…IQVLSYPCDK (164 aa)) enclose the MAM domain. N-linked (GlcNAc...) asparagine glycans are attached at residues N100, N139, and N210. The region spanning 195–280 (PHFLRLGDVE…TQSERGSGVS (86 aa)) is the Ig-like C2-type domain. C215 and C269 form a disulfide bridge. Fibronectin type-III domains lie at 293–388 (PIAP…CAEP), 391–487 (TPKT…TDED), 490–594 (GPVP…SAPS), and 595–688 (LPDY…TVGD). N-linked (GlcNAc...) asparagine glycans are attached at residues N415, N423, N435, N461, N551, N585, N589, N606, and N689. A helical membrane pass occupies residues 753–774 (IAGISAGILVFILLLLVVIVIV). Topologically, residues 775–1457 (KKSKLAKKRK…DVALEYLESS (683 aa)) are cytoplasmic. S868 is modified (phosphoserine). Tyrosine-protein phosphatase domains are found at residues 899-1159 (FKEE…ILEA) and 1191-1453 (LKDE…ALEY). Residues D1068, 1100-1106 (CSAGAGR), and Q1144 contribute to the substrate site. Catalysis depends on C1100, which acts as the Phosphocysteine intermediate. C1394 acts as the Phosphocysteine intermediate in catalysis.

Belongs to the protein-tyrosine phosphatase family. Receptor class 2B subfamily. Post-translationally, this protein undergoes proteolytic processing. High levels in liver and kidney. Lower levels in lung, brain and heart. Not seen in spleen and testis.

It localises to the membrane. The enzyme catalyses O-phospho-L-tyrosyl-[protein] + H2O = L-tyrosyl-[protein] + phosphate. In terms of biological role, regulation of processes involving cell contact and adhesion such as growth control, tumor invasion, and metastasis. Negative regulator of EGFR signaling pathway. Forms complexes with beta-catenin and gamma-catenin/plakoglobin. Beta-catenin may be a substrate for the catalytic activity of PTPRK/PTP-kappa. This Mus musculus (Mouse) protein is Receptor-type tyrosine-protein phosphatase kappa (Ptprk).